Reading from the N-terminus, the 450-residue chain is Tubulin beta-6 chain (450 aa).

8 residues coordinate GTP: Q11, E71, S140, G144, T145, G146, N206, and N228. E71 is a Mg(2+) binding site. Positions 429-450 are disordered; it reads DATVEDEEEYEGEEGLDENYET. The segment covering 431–450 has biased composition (acidic residues); sequence TVEDEEEYEGEEGLDENYET.

The protein belongs to the tubulin family. In terms of assembly, dimer of alpha and beta chains. A typical microtubule is a hollow water-filled tube with an outer diameter of 25 nm and an inner diameter of 15 nM. Alpha-beta heterodimers associate head-to-tail to form protofilaments running lengthwise along the microtubule wall with the beta-tubulin subunit facing the microtubule plus end conferring a structural polarity. Microtubules usually have 13 protofilaments but different protofilament numbers can be found in some organisms and specialized cells. The cofactor is Mg(2+).

The protein localises to the cytoplasm. The protein resides in the cytoskeleton. In terms of biological role, tubulin is the major constituent of microtubules, a cylinder consisting of laterally associated linear protofilaments composed of alpha- and beta-tubulin heterodimers. Microtubules grow by the addition of GTP-tubulin dimers to the microtubule end, where a stabilizing cap forms. Below the cap, tubulin dimers are in GDP-bound state, owing to GTPase activity of alpha-tubulin. The polypeptide is Tubulin beta-6 chain (Gossypium hirsutum (Upland cotton)).